Reading from the N-terminus, the 155-residue chain is MDSIFSNTQERPRSLHHLSEVLQIPLLDLRLSCVYCKKELTSLELYRFACIELKLVYRNNWPYAVCRVCLLFYSKVRKYRYYKYSVYGATLESITKKQLSDLSIRCYRCQCPLTPEEKQLHCEHKRRFHYIAYAWTGSCLQCWRHTSRQATESTV.

Zinc fingers lie at residues 33–69 (CVYCKKELTSLELYRFACIELKLVYRNNWPYAVCRVC) and 106–142 (CYRCQCPLTPEEKQLHCEHKRRFHYIAYAWTGSCLQC).

The protein belongs to the papillomaviridae E6 protein family. In terms of assembly, forms homodimers. Interacts with ubiquitin-protein ligase UBE3A/E6-AP; this interaction stimulates UBE3A ubiquitin activity. Interacts with host TP53 and EP300; this interaction inhibits TP53 activity.

The protein localises to the host cytoplasm. It is found in the host nucleus. Plays a major role in the induction and maintenance of cellular transformation. E6 associates with host UBE3A/E6-AP ubiquitin-protein ligase and modulates its activity. Sequesters tumor suppressor TP53 in the host cytoplasm and modulates its activity by interacting with host EP300 that results in the reduction of TP53 acetylation and activation. In turn, apoptosis induced by DNA damage is inhibited. E6 also protects host keratinocytes from apoptosis by mediating the degradation of host BAK1. May also inhibit host immune response. This is Protein E6 from Homo sapiens (Human).